Here is a 957-residue protein sequence, read N- to C-terminus: Glutamyl aminopeptidase (957 aa).

Topologically, residues 1–18 (MNFAEREGSKRYCIQTKH) are cytoplasmic. The helical; Signal-anchor for type II membrane protein transmembrane segment at 19–39 (VAILCAVVVGVGLIVGLAVGL) threads the bilayer. The Extracellular segment spans residues 40-957 (TRSCDSSGDG…EWFFNLLESG (918 aa)). The disordered stretch occupies residues 44 to 83 (DSSGDGGPGTAPAPSHLPSSTASPSGPPAQDQDICPASED). Asparagine 98 carries an N-linked (GlcNAc...) asparagine; atypical glycan. N-linked (GlcNAc...) asparagine glycosylation is found at asparagine 124 and asparagine 197. Position 223 (glutamate 223) interacts with substrate. 2 N-linked (GlcNAc...) asparagine glycosylation sites follow: asparagine 324 and asparagine 340. 357–361 (GAMEN) provides a ligand contact to substrate. Histidine 393 is a binding site for Zn(2+). Glutamate 394 serves as the catalytic Proton acceptor. Residues histidine 397 and glutamate 416 each contribute to the Zn(2+) site. N-linked (GlcNAc...) asparagine glycosylation is found at asparagine 554, asparagine 589, asparagine 597, asparagine 607, asparagine 678, asparagine 763, asparagine 773, asparagine 801, and asparagine 828. Arginine 887 serves as a coordination point for substrate.

The protein belongs to the peptidase M1 family. Homodimer; disulfide-linked. Zn(2+) is required as a cofactor. Expressed in choriocarcinoma cancer cell lines (at protein level). Expressed by epithelial cells of the proximal tubule cells and the glomerulus of the nephron. Also found in a variety of other tissues.

The protein localises to the cell membrane. The enzyme catalyses Release of N-terminal glutamate (and to a lesser extent aspartate) from a peptide.. Its activity is regulated as follows. Substrate specificity is modulated by calcium which enhances the enzymatic activity for cleavage of acidic residues while reducing its activity with basic residues. Inhibited by aminopeptidase inhibitors amastatin and bestatin. In terms of biological role, regulates central hypertension through its calcium-modulated preference to cleave N-terminal acidic residues from peptides such as angiotensin II. This is Glutamyl aminopeptidase (ENPEP) from Homo sapiens (Human).